We begin with the raw amino-acid sequence, 409 residues long: MRIPVDPSTSRRFTPPSTAFPCGGGGGGKMGENSGALSAQATAGPGGRTRPEVRSMVDVLADHAGELVRTDSPNFLCSVLPSHWRCNKTLPVAFKVVALGDVPDGTVVTVMAGNDENYSAELRNASAVMKNQVARFNDLRFVGRSGRGKSFTLTITVFTNPTQVATYHRAIKVTVDGPREPRRHRQKIEDQTKAFPDRFGDLRMRVTPSTPSPRGSLSTTSHFSSQAQTPIQGSSDLNPFSDPRQFDRSFPTLQSLTESRFPDPRMHYPGAMSAAFPYSATPSGTSLGSLSVAGMPASSRFHHTYLPPPYPGAPQSQSGPFQANPAPYHLFYGASSGSYQFSMAAAGGGERSPTRMLTSCPSGASVSAGNLMNPSLGQADGVEADGSHSNSPTALSTPGRMDEAVWRPY.

Disordered regions lie at residues 1 to 51 (MRIP…RTRP), 177 to 248 (GPRE…QFDR), and 346 to 409 (AGGG…WRPY). The segment covering 7 to 17 (PSTSRRFTPPS) has biased composition (polar residues). The Runt domain maps to 55-183 (SMVDVLADHA…TVDGPREPRR (129 aa)). Residues 187–204 (KIEDQTKAFPDRFGDLRM) are compositionally biased toward basic and acidic residues. A Glycyl lysine isopeptide (Lys-Gly) (interchain with G-Cter in SUMO2) cross-link involves residue lysine 193. Polar residues predominate over residues 207 to 238 (TPSTPSPRGSLSTTSHFSSQAQTPIQGSSDLN). Serine 241 is subject to Phosphoserine. 2 stretches are compositionally biased toward polar residues: residues 355–376 (RMLTSCPSGASVSAGNLMNPSL) and 387–396 (SHSNSPTALS). Over residues 400 to 409 (RMDEAVWRPY) the composition is skewed to basic and acidic residues.

In terms of assembly, heterodimer with CBFB. RUNX3 binds DNA as a monomer and through the Runt domain. DNA-binding is increased by heterodimerization. Interacts with TLE1 and SUV39H1. The tyrosine phosphorylated form (via runt domain) interacts with SRC (via protein kinase domain). Interacts with FYN and LCK. Interacts with FOXP3. Interacts with ZFHX3. Interacts with TBX21. In terms of processing, phosphorylated on tyrosine residues by SRC. Phosphorylated by LCK and FYN.

The protein resides in the nucleus. It is found in the cytoplasm. Functionally, forms the heterodimeric complex core-binding factor (CBF) with CBFB. RUNX members modulate the transcription of their target genes through recognizing the core consensus binding sequence 5'-TGTGGT-3', or very rarely, 5'-TGCGGT-3', within their regulatory regions via their runt domain, while CBFB is a non-DNA-binding regulatory subunit that allosterically enhances the sequence-specific DNA-binding capacity of RUNX. The heterodimers bind to the core site of a number of enhancers and promoters, including murine leukemia virus, polyomavirus enhancer, T-cell receptor enhancers, LCK, IL3 and GM-CSF promoters. May be involved in the control of cellular proliferation and/or differentiation. In association with ZFHX3, up-regulates CDKN1A promoter activity following TGF-beta stimulation. CBF complexes repress ZBTB7B transcription factor during cytotoxic (CD8+) T cell development. They bind to RUNX-binding sequence within the ZBTB7B locus acting as transcriptional silencer and allowing for cytotoxic T cell differentiation. CBF complexes binding to the transcriptional silencer is essential for recruitment of nuclear protein complexes that catalyze epigenetic modifications to establish epigenetic ZBTB7B silencing. Necessary for the development and survival of sensory neurons expressing parvalbumin. The sequence is that of Runt-related transcription factor 3 (Runx3) from Mus musculus (Mouse).